A 621-amino-acid polypeptide reads, in one-letter code: (-)-beta-phellandrene synthase 1, chloroplastic (621 aa).

Residues 1–49 (MALALVSVAPLVSMRRSLFSSPYELKSIDKTIPNLVMCRKRMSGTPSIR) constitute a chloroplast transit peptide. Residues Asp372, Asp376, and Asp524 each contribute to the Mg(2+) site. Residues 372-376 (DDIYD) carry the DDXXD motif motif.

Belongs to the terpene synthase family. Tpsd subfamily. The cofactor is Mg(2+). It depends on Mn(2+) as a cofactor.

The protein resides in the plastid. Its subcellular location is the chloroplast. The enzyme catalyses (2E)-geranyl diphosphate = (-)-beta-phellandrene + diphosphate. The protein operates within terpene metabolism; oleoresin biosynthesis. It functions in the pathway secondary metabolite biosynthesis; terpenoid biosynthesis. Functionally, monoterpene synthase (TPS) involved in the biosynthesis of monoterpene natural products included in conifer oleoresin secretions and volatile emissions; these compounds contribute to biotic and abiotic stress defense against herbivores and pathogens. Catalyzes the conversion of (2E)-geranyl diphosphate (GPP) to (-)-beta-phellandrene and, to a lower extent, to (-)-alpha-phellandrene. The protein is (-)-beta-phellandrene synthase 1, chloroplastic of Pinus contorta (Shore pine).